Here is a 353-residue protein sequence, read N- to C-terminus: Chorismate synthase (353 aa).

R48 and R54 together coordinate NADP(+). FMN is bound by residues 125–127 (RSS), 238–239 (NA), G278, 293–297 (KPTSS), and R319.

It belongs to the chorismate synthase family. As to quaternary structure, homotetramer. The cofactor is FMNH2.

It carries out the reaction 5-O-(1-carboxyvinyl)-3-phosphoshikimate = chorismate + phosphate. Its pathway is metabolic intermediate biosynthesis; chorismate biosynthesis; chorismate from D-erythrose 4-phosphate and phosphoenolpyruvate: step 7/7. Catalyzes the anti-1,4-elimination of the C-3 phosphate and the C-6 proR hydrogen from 5-enolpyruvylshikimate-3-phosphate (EPSP) to yield chorismate, which is the branch point compound that serves as the starting substrate for the three terminal pathways of aromatic amino acid biosynthesis. This reaction introduces a second double bond into the aromatic ring system. This Bordetella pertussis (strain Tohama I / ATCC BAA-589 / NCTC 13251) protein is Chorismate synthase.